The chain runs to 181 residues: ATP synthase subunit delta (181 aa).

Belongs to the ATPase delta chain family. As to quaternary structure, F-type ATPases have 2 components, F(1) - the catalytic core - and F(0) - the membrane proton channel. F(1) has five subunits: alpha(3), beta(3), gamma(1), delta(1), epsilon(1). F(0) has three main subunits: a(1), b(2) and c(10-14). The alpha and beta chains form an alternating ring which encloses part of the gamma chain. F(1) is attached to F(0) by a central stalk formed by the gamma and epsilon chains, while a peripheral stalk is formed by the delta and b chains.

Its subcellular location is the cell membrane. In terms of biological role, f(1)F(0) ATP synthase produces ATP from ADP in the presence of a proton or sodium gradient. F-type ATPases consist of two structural domains, F(1) containing the extramembraneous catalytic core and F(0) containing the membrane proton channel, linked together by a central stalk and a peripheral stalk. During catalysis, ATP synthesis in the catalytic domain of F(1) is coupled via a rotary mechanism of the central stalk subunits to proton translocation. Functionally, this protein is part of the stalk that links CF(0) to CF(1). It either transmits conformational changes from CF(0) to CF(1) or is implicated in proton conduction. The protein is ATP synthase subunit delta of Shouchella clausii (strain KSM-K16) (Alkalihalobacillus clausii).